The following is a 122-amino-acid chain: MMVDPLYKGGLTKPLCSSGLRPITDSCVVIPNFDNSVRSIIVVNILVFAGILYSQFRNTLSIFSLWCPNTRAVFLFICPCLLYFYQGIFSTDEQIGTFNIIWMLRRLTIELIIRNLNAEKER.

2 helical membrane-spanning segments follow: residues 36-56 (SVRS…YSQF) and 72-92 (AVFL…FSTD).

It is found in the membrane. This is an uncharacterized protein from Saccharomyces cerevisiae (strain ATCC 204508 / S288c) (Baker's yeast).